The chain runs to 211 residues: Ras-related protein RABB1c (211 aa).

Serine 2 is modified (N-acetylserine). A GTP-binding site is contributed by 13–21 (GDTGVGKSC). Residues 35 to 43 (HDLTIGVEF) carry the Effector region motif. GTP contacts are provided by residues 61–65 (DTAGQ), 119–122 (NKCD), and 149–151 (SAK). 2 S-geranylgeranyl cysteine lipidation sites follow: cysteine 209 and cysteine 210.

Belongs to the small GTPase superfamily. Rab family.

The protein resides in the cell membrane. Functionally, intracellular vesicle trafficking and protein transport. The polypeptide is Ras-related protein RABB1c (RABB1C) (Arabidopsis thaliana (Mouse-ear cress)).